Here is a 160-residue protein sequence, read N- to C-terminus: NADH-quinone oxidoreductase subunit I (160 aa).

2 4Fe-4S ferredoxin-type domains span residues 51–80 (RRYKNGEERCIACKLCEVVCPAQAITIEAA) and 91–120 (TKYDIDMTKCIYCGFCQEACPVDAIVEGPN). Positions 60, 63, 66, 70, 100, 103, 106, and 110 each coordinate [4Fe-4S] cluster.

The protein belongs to the complex I 23 kDa subunit family. NDH-1 is composed of 14 different subunits. Subunits NuoA, H, J, K, L, M, N constitute the membrane sector of the complex. The cofactor is [4Fe-4S] cluster.

Its subcellular location is the cell inner membrane. The catalysed reaction is a quinone + NADH + 5 H(+)(in) = a quinol + NAD(+) + 4 H(+)(out). Its function is as follows. NDH-1 shuttles electrons from NADH, via FMN and iron-sulfur (Fe-S) centers, to quinones in the respiratory chain. The immediate electron acceptor for the enzyme in this species is believed to be ubiquinone. Couples the redox reaction to proton translocation (for every two electrons transferred, four hydrogen ions are translocated across the cytoplasmic membrane), and thus conserves the redox energy in a proton gradient. This chain is NADH-quinone oxidoreductase subunit I, found in Neorickettsia sennetsu (strain ATCC VR-367 / Miyayama) (Ehrlichia sennetsu).